Consider the following 271-residue polypeptide: Tryptophan synthase alpha chain (271 aa).

Residues E56 and D67 each act as proton acceptor in the active site.

Belongs to the TrpA family. Tetramer of two alpha and two beta chains.

The enzyme catalyses (1S,2R)-1-C-(indol-3-yl)glycerol 3-phosphate + L-serine = D-glyceraldehyde 3-phosphate + L-tryptophan + H2O. It participates in amino-acid biosynthesis; L-tryptophan biosynthesis; L-tryptophan from chorismate: step 5/5. Functionally, the alpha subunit is responsible for the aldol cleavage of indoleglycerol phosphate to indole and glyceraldehyde 3-phosphate. The protein is Tryptophan synthase alpha chain of Mycobacterium intracellulare.